The primary structure comprises 163 residues: Peptide methionine sulfoxide reductase MsrA (163 aa).

Residue Cys10 is part of the active site.

It belongs to the MsrA Met sulfoxide reductase family.

It carries out the reaction L-methionyl-[protein] + [thioredoxin]-disulfide + H2O = L-methionyl-(S)-S-oxide-[protein] + [thioredoxin]-dithiol. It catalyses the reaction [thioredoxin]-disulfide + L-methionine + H2O = L-methionine (S)-S-oxide + [thioredoxin]-dithiol. Its function is as follows. Has an important function as a repair enzyme for proteins that have been inactivated by oxidation. Catalyzes the reversible oxidation-reduction of methionine sulfoxide in proteins to methionine. This Ruthia magnifica subsp. Calyptogena magnifica protein is Peptide methionine sulfoxide reductase MsrA.